Consider the following 239-residue polypeptide: MNSLYTAEGVMDKHSLWQRYVPLVRHEALRLQVRLPASVELDDLLQAGGIGLLNAVDRYDALQGTAFTTYAVQRIRGAMLDELRSRDWVPRSVRRNAREVAQAMGQLEQELGRNATETEVAERLGIPVAEYRQMLLDTNNSQLFSYDEWREEHGDSIELVTEEHQQENPLHQLLEGDLRQRVMDAIESLPEREQLVLTLYYQEELNLKEIGAVLEVGESRVSQLHSQAIKRLRTKLGKL.

A sigma-70 factor domain-2 region spans residues 16–88 (LWQRYVPLVR…MLDELRSRDW (73 aa)). Positions 43–46 (DLLQ) match the Interaction with polymerase core subunit RpoC motif. The interval 96–166 (NAREVAQAMG…IELVTEEHQQ (71 aa)) is sigma-70 factor domain-3. Residues 185 to 233 (AIESLPEREQLVLTLYYQEELNLKEIGAVLEVGESRVSQLHSQAIKRLR) are sigma-70 factor domain-4. Residues 207–226 (LKEIGAVLEVGESRVSQLHS) constitute a DNA-binding region (H-T-H motif).

This sequence belongs to the sigma-70 factor family. FliA subfamily.

Its subcellular location is the cytoplasm. In terms of biological role, sigma factors are initiation factors that promote the attachment of RNA polymerase to specific initiation sites and are then released. This sigma factor controls the expression of flagella-related genes. This is RNA polymerase sigma factor FliA from Salmonella typhi.